The chain runs to 91 residues: Small ribosomal subunit protein bS20 (91 aa).

The span at 1-18 (MPLHKSAEKRLRQSERRN) shows a compositional bias: basic and acidic residues. The segment at 1–25 (MPLHKSAEKRLRQSERRNARNRARK) is disordered.

The protein belongs to the bacterial ribosomal protein bS20 family.

In terms of biological role, binds directly to 16S ribosomal RNA. The sequence is that of Small ribosomal subunit protein bS20 from Chlorobium luteolum (strain DSM 273 / BCRC 81028 / 2530) (Pelodictyon luteolum).